Here is a 519-residue protein sequence, read N- to C-terminus: Probable U3 small nucleolar RNA-associated protein 18 (519 aa).

WD repeat units lie at residues D26–T66, G71–I111, S216–V254, L259–V298, N306–S345, K347–R386, Q390–A429, N438–N479, and T485–D519.

It belongs to the WD repeat UTP18 family. Component of the ribosomal small subunit (SSU) processome.

Its subcellular location is the nucleus. It localises to the nucleolus. Involved in nucleolar processing of pre-18S ribosomal RNA. This chain is Probable U3 small nucleolar RNA-associated protein 18, found in Schizosaccharomyces pombe (strain 972 / ATCC 24843) (Fission yeast).